The primary structure comprises 288 residues: Bifunctional protein FolD (288 aa).

Residues 166 to 168, Ser-191, and Ile-232 contribute to the NADP(+) site; that span reads GRS.

It belongs to the tetrahydrofolate dehydrogenase/cyclohydrolase family. In terms of assembly, homodimer.

It carries out the reaction (6R)-5,10-methylene-5,6,7,8-tetrahydrofolate + NADP(+) = (6R)-5,10-methenyltetrahydrofolate + NADPH. The enzyme catalyses (6R)-5,10-methenyltetrahydrofolate + H2O = (6R)-10-formyltetrahydrofolate + H(+). Its pathway is one-carbon metabolism; tetrahydrofolate interconversion. Functionally, catalyzes the oxidation of 5,10-methylenetetrahydrofolate to 5,10-methenyltetrahydrofolate and then the hydrolysis of 5,10-methenyltetrahydrofolate to 10-formyltetrahydrofolate. The polypeptide is Bifunctional protein FolD (Rickettsia canadensis (strain McKiel)).